The chain runs to 292 residues: 4-diphosphocytidyl-2-C-methyl-D-erythritol kinase (292 aa).

Residue Lys-13 is part of the active site. 97 to 107 (PVAAGLAGGSS) contributes to the ATP binding site. Asp-139 is an active-site residue.

The protein belongs to the GHMP kinase family. IspE subfamily.

The enzyme catalyses 4-CDP-2-C-methyl-D-erythritol + ATP = 4-CDP-2-C-methyl-D-erythritol 2-phosphate + ADP + H(+). The protein operates within isoprenoid biosynthesis; isopentenyl diphosphate biosynthesis via DXP pathway; isopentenyl diphosphate from 1-deoxy-D-xylulose 5-phosphate: step 3/6. In terms of biological role, catalyzes the phosphorylation of the position 2 hydroxy group of 4-diphosphocytidyl-2C-methyl-D-erythritol. The polypeptide is 4-diphosphocytidyl-2-C-methyl-D-erythritol kinase (Bacillus thuringiensis (strain Al Hakam)).